Reading from the N-terminus, the 477-residue chain is MDGFYDQQVPYMVTNSQRGRNCNEKPTNVRKRKFINRDLAHDSEELFQDLSQLQETWLAEAQVPDNDEQFVPDYQAESLAFHGLPLKIKKEPHSPCSEISSACSQEQPFKFSYGEKCLYNVSAYDQKPQVGMRPSNPPTPSSTPVSPLHHASPNSTHTPKPDRAFPAHLPPSQSIPDSSYPMDHRFRRQLSEPCNSFPPLPTMPREGRPMYQRQMSEPNIPFPPQGFKQEYHDPVYEHNTMVGSAASQSFPPPLMIKQEPRDFAYDSEVPSCHSIYMRQEGFLAHPSRTEGCMFEKGPRQFYDDTCVVPEKFDGDIKQEPGMYREGPTYQRRGSLQLWQFLVALLDDPSNSHFIAWTGRGMEFKLIEPEEVARRWGIQKNRPAMNYDKLSRSLRYYYEKGIMQKVAGERYVYKFVCDPEALFSMAFPDNQRPLLKTDMERHINEEDTVPLSHFDESMAYMPEGGCCNPHPYNEGYVY.

A Phosphoserine modification is found at serine 94. Positions 128-179 (PQVGMRPSNPPTPSSTPVSPLHHASPNSTHTPKPDRAFPAHLPPSQSIPDSS) are disordered. Serine 191 and serine 216 each carry phosphoserine; by RPS6KA1 and RPS6KA5. Lysine 317 is covalently cross-linked (Glycyl lysine isopeptide (Lys-Gly) (interchain with G-Cter in SUMO2)). A DNA-binding region (ETS) is located at residues 335 to 415 (LQLWQFLVAL…AGERYVYKFV (81 aa)).

It belongs to the ETS family. Post-translationally, sumoylated. Phosphorylated at Ser-191 and Ser-216 by RPS6KA1 and RPS6KA5; phosphorylation activates transcriptional activity. As to expression, very highly expressed in brain, highly expressed in testis, lung and heart, moderately in spleen, small intestine, pancreas and colon, weakly in liver, prostate and thymus, very weakly in skeletal muscle, kidney and ovary and not in placenta and peripheral blood leukocytes.

Its subcellular location is the nucleus. In terms of biological role, transcriptional activator that binds to DNA sequences containing the consensus pentanucleotide 5'-CGGA[AT]-3'. Required for olfactory dopaminergic neuron differentiation; may directly activate expression of tyrosine hydroxylase (TH). The chain is ETS translocation variant 1 from Homo sapiens (Human).